Here is a 471-residue protein sequence, read N- to C-terminus: 3-isopropylmalate dehydratase large subunit (471 aa).

[4Fe-4S] cluster-binding residues include Cys347, Cys407, and Cys410.

It belongs to the aconitase/IPM isomerase family. LeuC type 1 subfamily. In terms of assembly, heterodimer of LeuC and LeuD. The cofactor is [4Fe-4S] cluster.

The catalysed reaction is (2R,3S)-3-isopropylmalate = (2S)-2-isopropylmalate. It participates in amino-acid biosynthesis; L-leucine biosynthesis; L-leucine from 3-methyl-2-oxobutanoate: step 2/4. Catalyzes the isomerization between 2-isopropylmalate and 3-isopropylmalate, via the formation of 2-isopropylmaleate. The sequence is that of 3-isopropylmalate dehydratase large subunit from Vibrio parahaemolyticus serotype O3:K6 (strain RIMD 2210633).